Consider the following 45-residue polypeptide: uncharacterized protein (45 aa).

Residues 1–19 (MTFQILFLFVFHFVYIFRA) form the signal peptide.

This is an uncharacterized protein from Saccharomyces cerevisiae (strain ATCC 204508 / S288c) (Baker's yeast).